We begin with the raw amino-acid sequence, 80 residues long: uncharacterized protein (80 aa).

This is an uncharacterized protein from Homo sapiens (Human).